The primary structure comprises 418 residues: AP-3 complex subunit mu-1 (418 aa).

One can recognise an MHD domain in the interval 176–417; the sequence is NNEAYFDVIE…ITKAGKFQVR (242 aa).

This sequence belongs to the adaptor complexes medium subunit family. In terms of assembly, the AP-3 complex associates with the BLOC-1 complex.

The protein localises to the golgi apparatus. It localises to the cytoplasmic vesicle membrane. Functionally, part of the AP-3 complex, an adaptor-related complex which is not clathrin-associated. The complex is associated with the Golgi region as well as more peripheral structures. It facilitates the budding of vesicles from the Golgi membrane and may be directly involved in trafficking to lysosomes. In concert with the BLOC-1 complex, AP-3 is required to target cargos into vesicles assembled at cell bodies for delivery into neurites and nerve terminals. The protein is AP-3 complex subunit mu-1 (AP3M1) of Gallus gallus (Chicken).